The primary structure comprises 451 residues: MKTVTDYQNKNILVLGIAKSGYAAANLLKSLGANVIVNDGKPLANNELAAELQAKGMDVVCGGHPLELLERNIALVVKNPGIPYSNPLLVAATEKQIPIITEIELAYRISEAPFIGITGSNGKTTTTMLTFEMLKEGEKHPAIAGNIGTVACEVAQAAKANEVLVTELSSFQLMGVETFQPKIAAFLNLFEAHLDYHGTKKEYGLAKANIFKNQTAADYSVINADDADVMELSANSKGQKILFSTTKEIEDGACIKENALYFKGEKVVEIKDIVLPGKHNLENILAAMSIAKLLGVANEAIVAVLKRFTGVKHRLEYVTTIHNRKFYNDSKATNILATEKALSAFTSPVILLAGGLDRGNEFDDLIPYFEQHVKAIVTYGQTAPKLVHAAEKAGLAIIEAVHHLEEAVERAYAHSADGDVILLSPACASWDQFKTFEERGDIFIQAVHKLI.

Residue 119-125 (GSNGKTT) coordinates ATP.

It belongs to the MurCDEF family.

The protein resides in the cytoplasm. It catalyses the reaction UDP-N-acetyl-alpha-D-muramoyl-L-alanine + D-glutamate + ATP = UDP-N-acetyl-alpha-D-muramoyl-L-alanyl-D-glutamate + ADP + phosphate + H(+). It participates in cell wall biogenesis; peptidoglycan biosynthesis. In terms of biological role, cell wall formation. Catalyzes the addition of glutamate to the nucleotide precursor UDP-N-acetylmuramoyl-L-alanine (UMA). The chain is UDP-N-acetylmuramoylalanine--D-glutamate ligase from Bacillus cytotoxicus (strain DSM 22905 / CIP 110041 / 391-98 / NVH 391-98).